The chain runs to 221 residues: UPF0758 protein YicR (221 aa).

The region spanning 99 to 221 (ALLSPEMTRE…YVSFAERGWI (123 aa)) is the MPN domain. His-170, His-172, and Asp-183 together coordinate Zn(2+). Residues 170 to 183 (HNHPSGCAEPSKAD) carry the JAMM motif motif.

The protein belongs to the UPF0758 family. YicR subfamily.

This is UPF0758 protein YicR from Salmonella newport (strain SL254).